Consider the following 334-residue polypeptide: GTPase Obg (334 aa).

Residues 1-159 (MRFVDEVVIK…KEVRLELNLL (159 aa)) form the Obg domain. An OBG-type G domain is found at 160-331 (ADVALLGLPN…LAKKLNEFLQ (172 aa)). GTP is bound by residues 166–173 (GLPNAGKS), 191–195 (FTTMY), 212–215 (DIPG), 282–285 (NKID), and 312–314 (SAA). The Mg(2+) site is built by Ser173 and Thr193.

The protein belongs to the TRAFAC class OBG-HflX-like GTPase superfamily. OBG GTPase family. Monomer. Mg(2+) serves as cofactor.

It is found in the cytoplasm. An essential GTPase which binds GTP, GDP and possibly (p)ppGpp with moderate affinity, with high nucleotide exchange rates and a fairly low GTP hydrolysis rate. Plays a role in control of the cell cycle, stress response, ribosome biogenesis and in those bacteria that undergo differentiation, in morphogenesis control. This Francisella tularensis subsp. holarctica (strain FTNF002-00 / FTA) protein is GTPase Obg.